The sequence spans 618 residues: Indolepyruvate oxidoreductase subunit IorA (618 aa).

4Fe-4S ferredoxin-type domains are found at residues 558 to 587 (GRPM…VTRE) and 588 to 617 (GEVF…PEGK). 8 residues coordinate [4Fe-4S] cluster: Cys-568, Cys-571, Cys-574, Cys-580, Cys-597, Cys-600, Cys-603, and Cys-607.

As to quaternary structure, heterodimer of the IorA and IorB subunits. It depends on [4Fe-4S] cluster as a cofactor.

The enzyme catalyses indole-3-pyruvate + 2 oxidized [2Fe-2S]-[ferredoxin] + CoA = (indol-3-yl)acetyl-CoA + 2 reduced [2Fe-2S]-[ferredoxin] + CO2 + H(+). Functionally, catalyzes the ferredoxin-dependent oxidative decarboxylation of arylpyruvates. The polypeptide is Indolepyruvate oxidoreductase subunit IorA (iorA) (Methanothermobacter thermautotrophicus (strain ATCC 29096 / DSM 1053 / JCM 10044 / NBRC 100330 / Delta H) (Methanobacterium thermoautotrophicum)).